The sequence spans 381 residues: Arrestin-C (381 aa).

It belongs to the arrestin family. In terms of assembly, homodimer; disulfide-linked in response to retinal illumination. Interacts with CXCR4; the interaction is dependent on the C-terminal phosphorylation of CXCR4 and modulates the calcium ion mobilization activity of CXCR4. Interacts with GPR84. Inner and outer segments, and the inner plexiform regions of the retina.

The protein resides in the photoreceptor inner segment. It localises to the cell projection. Its subcellular location is the cilium. It is found in the photoreceptor outer segment. In terms of biological role, may play a role in an as yet undefined retina-specific signal transduction. Could bind to photoactivated-phosphorylated red/green opsins. The chain is Arrestin-C (Arr3) from Mus musculus (Mouse).